Consider the following 248-residue polypeptide: Triosephosphate isomerase (248 aa).

Residue 11-13 (NWK) coordinates substrate. The active-site Electrophile is histidine 95. The active-site Proton acceptor is glutamate 167. Substrate-binding positions include glycine 173, serine 212, and 233-234 (GG).

Belongs to the triosephosphate isomerase family. In terms of assembly, homodimer.

The protein localises to the cytoplasm. It carries out the reaction D-glyceraldehyde 3-phosphate = dihydroxyacetone phosphate. The protein operates within carbohydrate biosynthesis; gluconeogenesis. It participates in carbohydrate degradation; glycolysis; D-glyceraldehyde 3-phosphate from glycerone phosphate: step 1/1. In terms of biological role, involved in the gluconeogenesis. Catalyzes stereospecifically the conversion of dihydroxyacetone phosphate (DHAP) to D-glyceraldehyde-3-phosphate (G3P). This chain is Triosephosphate isomerase, found in Ralstonia nicotianae (strain ATCC BAA-1114 / GMI1000) (Ralstonia solanacearum).